A 305-amino-acid chain; its full sequence is Thioredoxin reductase (305 aa).

Residue 28 to 35 (LGIETSSQ) participates in FAD binding. Cysteine 129 and cysteine 132 are disulfide-bonded. An FAD-binding site is contributed by 272–281 (DCCDWIYRQA).

It belongs to the class-II pyridine nucleotide-disulfide oxidoreductase family. As to quaternary structure, homodimer. Requires FAD as cofactor.

The protein localises to the cytoplasm. It catalyses the reaction [thioredoxin]-dithiol + NADP(+) = [thioredoxin]-disulfide + NADPH + H(+). This is Thioredoxin reductase (TRXB) from Spironucleus barkhanus.